A 141-amino-acid polypeptide reads, in one-letter code: Protein C19orf12 homolog (141 aa).

The chain crosses the membrane as a helical span at residues 33–53 (LVAAAGAFLGGLVGGPPGIAV).

The protein belongs to the C19orf12 family.

It localises to the mitochondrion. It is found in the mitochondrion membrane. The protein localises to the endoplasmic reticulum. The protein resides in the cytoplasm. Its subcellular location is the cytosol. The polypeptide is Protein C19orf12 homolog (Xenopus tropicalis (Western clawed frog)).